The following is a 190-amino-acid chain: CASP-like protein 1E1 (190 aa).

The tract at residues 1 to 23 is disordered; that stretch reads MEHESKNKVDGMEMEKGKKESGS. The Cytoplasmic segment spans residues 1–28; the sequence is MEHESKNKVDGMEMEKGKKESGSRKGLE. Residues 29–49 traverse the membrane as a helical segment; that stretch reads LTMRVLALVLTMVAATVLGVA. The Extracellular segment spans residues 50 to 83; it reads KQTKVVPIKLIPTLPPLNVSTTAKASYLSAFVYN. N-linked (GlcNAc...) asparagine glycosylation is present at N67. A helical transmembrane segment spans residues 84–104; that stretch reads ISANAIACGYTAISIVIVMIS. Topologically, residues 105–111 are cytoplasmic; sequence KGKRSKS. A helical transmembrane segment spans residues 112 to 132; that stretch reads LLMAVLIGDLMMVALLFSSTG. Topologically, residues 133–163 are extracellular; sequence AAGAIGLMGRHGNKHVMWKKVCGVFGKFCNQ. Residues 164-184 traverse the membrane as a helical segment; that stretch reads AAVSVAITLIASVVFMLLVVL. Residues 185–190 lie on the Cytoplasmic side of the membrane; sequence DALKLP.

Belongs to the Casparian strip membrane proteins (CASP) family. As to quaternary structure, homodimer and heterodimers.

It localises to the cell membrane. The protein is CASP-like protein 1E1 of Arabidopsis thaliana (Mouse-ear cress).